We begin with the raw amino-acid sequence, 276 residues long: MPELPEVEVTRRGIEPYVAGRRVERVDVRTPALRWPIPPGFARLLHGRLVRKVERRGKYLLFEIDEGWFIVHLGMTGTLRVLRNVPHPPAAAKHDHVDWIFDDFILRFRDPRRFGAVLWHPRSAGDVLDHPLLADLGVEPFAPSFSGALLHRKTRGRKVSVKQALLAGEIVVGVGNIYASESLFRAGIRPTTPAGRISLVRYDLLADAVRVTLAAAIEKGGSTLRDFVGSNGESGYFQLDYFVYDRAGQPCRVCGTPIKQIVQGQRSTYYCPTCQR.

P2 functions as the Schiff-base intermediate with DNA in the catalytic mechanism. The active-site Proton donor is the E3. Catalysis depends on K58, which acts as the Proton donor; for beta-elimination activity. The DNA site is built by H94, R112, and R157. The FPG-type zinc-finger motif lies at F242–R276. Residue R266 is the Proton donor; for delta-elimination activity of the active site.

The protein belongs to the FPG family. Monomer. The cofactor is Zn(2+).

It catalyses the reaction Hydrolysis of DNA containing ring-opened 7-methylguanine residues, releasing 2,6-diamino-4-hydroxy-5-(N-methyl)formamidopyrimidine.. The enzyme catalyses 2'-deoxyribonucleotide-(2'-deoxyribose 5'-phosphate)-2'-deoxyribonucleotide-DNA = a 3'-end 2'-deoxyribonucleotide-(2,3-dehydro-2,3-deoxyribose 5'-phosphate)-DNA + a 5'-end 5'-phospho-2'-deoxyribonucleoside-DNA + H(+). Functionally, involved in base excision repair of DNA damaged by oxidation or by mutagenic agents. Acts as a DNA glycosylase that recognizes and removes damaged bases. Has a preference for oxidized purines, such as 7,8-dihydro-8-oxoguanine (8-oxoG). Has AP (apurinic/apyrimidinic) lyase activity and introduces nicks in the DNA strand. Cleaves the DNA backbone by beta-delta elimination to generate a single-strand break at the site of the removed base with both 3'- and 5'-phosphates. The chain is Formamidopyrimidine-DNA glycosylase from Paraburkholderia phymatum (strain DSM 17167 / CIP 108236 / LMG 21445 / STM815) (Burkholderia phymatum).